Reading from the N-terminus, the 365-residue chain is MTELKRTPLYEQHRRAGAKLIDFGGWEMPVQYAGVIEEHKAVRSKAGLFDVSHMGEVELKGKDSLAFLQYLLTNDVSRIQDNQIQYSPMCTSAGGVVDDLLVYRYSREHFLLVVNAANTDKDFAWMQAQAEGFEISLENRSGDFAQLALQGPWAEKILQKLTSMDLAQINYYWFKHGEVDGVLCLISRTGYTGEDGFEIYLPPEHAPRMWERILEVGGSEGVQPIGLGARDTLRFEARLPLYGNELGPDITPLEAGLGFFVKLEKDNFIGKEALSAQKEKGVPRKLVGLEMIERGIARSHYPLQKEGKEIGFITSGSFSPTLNKNIALGLIPPEYAQIGETLDVIIRGKAVKARIIPSLFYKRQG.

It belongs to the GcvT family. In terms of assembly, the glycine cleavage system is composed of four proteins: P, T, L and H.

The enzyme catalyses N(6)-[(R)-S(8)-aminomethyldihydrolipoyl]-L-lysyl-[protein] + (6S)-5,6,7,8-tetrahydrofolate = N(6)-[(R)-dihydrolipoyl]-L-lysyl-[protein] + (6R)-5,10-methylene-5,6,7,8-tetrahydrofolate + NH4(+). In terms of biological role, the glycine cleavage system catalyzes the degradation of glycine. This chain is Aminomethyltransferase, found in Desulfitobacterium hafniense (strain Y51).